We begin with the raw amino-acid sequence, 145 residues long: Large ribosomal subunit protein bL17 (145 aa).

The tract at residues 123-145 is disordered; that stretch reads KRVDRKKKDPAKDKTEEKKLATA.

The protein belongs to the bacterial ribosomal protein bL17 family. In terms of assembly, part of the 50S ribosomal subunit. Contacts protein L32.

In Pelagibacter ubique (strain HTCC1062), this protein is Large ribosomal subunit protein bL17.